We begin with the raw amino-acid sequence, 690 residues long: Peroxidase (690 aa).

Positions 1 to 20 (MIRARDLLLLALLGFISSAL) are cleaved as a signal peptide. Cys100 and Cys112 form a disulfide bridge. His185 serves as the catalytic Proton acceptor. Asn310 carries an N-linked (GlcNAc...) asparagine glycan. Cys315 and Cys324 form a disulfide bridge. His437 lines the heme b pocket. 2 disulfides stabilise this stretch: Cys536–Cys592 and Cys636–Cys662.

The protein belongs to the peroxidase family. XPO subfamily. It depends on heme b as a cofactor.

The protein localises to the secreted. The enzyme catalyses 2 a phenolic donor + H2O2 = 2 a phenolic radical donor + 2 H2O. Involved in the chorion hardening process, through protein cross-linking mediated by the formation of di- and tri-tyrosine bonds. This is Peroxidase (Pxd) from Drosophila melanogaster (Fruit fly).